Here is a 475-residue protein sequence, read N- to C-terminus: Gamma-aminobutyric acid receptor subunit gamma-2 (475 aa).

The signal sequence occupies residues 1-39 (MSSPNIWSTGSSVYSTPVFSQKMTLWILLLLSLYPGLTR). Topologically, residues 41–275 (KSDDDYEDYA…FDLSRRMGYF (235 aa)) are extracellular. N-linked (GlcNAc...) asparagine glycosylation is found at Asn-52 and Asn-129. A disulfide bridge links Cys-190 with Cys-204. Residue Asn-247 is glycosylated (N-linked (GlcNAc...) asparagine). A helical membrane pass occupies residues 276–296 (TIQTYIPCTLIVVLSWVSFWI). Topologically, residues 297–302 (NKDAVP) are cytoplasmic. Residues 303 to 322 (ARTSLGITTVLTMTTLSTIA) form a helical membrane-spanning segment. At 323 to 334 (RKSLPKVSYVTA) the chain is on the extracellular side. The chain crosses the membrane as a helical span at residues 335 to 359 (MDLFVSVCFIFVFSALVEYGTLHYF). Residues 360–451 (VSNRKPSKDK…IHIRIAKMDS (92 aa)) are Cytoplasmic-facing. Residue Ser-382 is modified to Phosphoserine; by PKC. A helical transmembrane segment spans residues 452-472 (YARIFFPTAFCLFNLVYWVSY). Over 473 to 475 (LYL) the chain is Extracellular.

The protein belongs to the ligand-gated ion channel (TC 1.A.9) family. Gamma-aminobutyric acid receptor (TC 1.A.9.5) subfamily. GABRG2 sub-subfamily. As to quaternary structure, heteropentamer, formed by a combination of alpha (GABRA1-6), beta (GABRB1-3), gamma (GABRG1-3), delta (GABRD), epsilon (GABRE), rho (GABRR1-3), pi (GABRP) and theta (GABRQ) chains, each subunit exhibiting distinct physiological and pharmacological properties. Interacts with GABARAP. Interacts with KIF21B. Identified in a complex of 720 kDa composed of LHFPL4, NLGN2, GABRA1, GABRB2, GABRG2 and GABRB3. Interacts with LHFPL4. Interacts with SHISA7; interaction leads to the regulation of GABA(A) receptor trafficking, channel deactivation kinetics and pharmacology. Post-translationally, palmitoylated by ZDHHC3/GODZ; required for the accumulation of GABA(A) receptors at the postsynaptic membrane of inhibitory GABAergic synapses. Glycosylated.

It localises to the postsynaptic cell membrane. The protein localises to the cell membrane. The protein resides in the cell projection. It is found in the dendrite. Its subcellular location is the cytoplasmic vesicle membrane. The enzyme catalyses chloride(in) = chloride(out). Allosterically activated by benzodiazepines. Activated by pentobarbital. Inhibited by the antagonist bicuculline. Inhibited by zinc ions. Potentiated by histamine. In terms of biological role, gamma subunit of the heteropentameric ligand-gated chloride channel gated by gamma-aminobutyric acid (GABA), a major inhibitory neurotransmitter in the brain. GABA-gated chloride channels, also named GABA(A) receptors (GABAAR), consist of five subunits arranged around a central pore and contain GABA active binding site(s) located at the alpha and beta subunit interface(s). When activated by GABA, GABAARs selectively allow the flow of chloride anions across the cell membrane down their electrochemical gradient. Gamma-2/GABRG2-containing GABAARs are found at both synaptic and extrasynaptic sites. Chloride influx into the postsynaptic neuron following GABAAR opening decreases the neuron ability to generate a new action potential, thereby reducing nerve transmission. GABAARs containing alpha-1 and beta-2 or -3 subunits exhibit synaptogenic activity; the gamma-2 subunit being necessary but not sufficient to induce rapid synaptic contacts formation. Extrasynaptic gamma-2-containing receptors contribute to the tonic GABAergic inhibition. GABAARs function also as histamine receptor where histamine binds at the interface of two neighboring beta subunits and potentiates GABA response in a gamma-2 subunit-controlled manner. This Bos taurus (Bovine) protein is Gamma-aminobutyric acid receptor subunit gamma-2 (GABRG2).